Reading from the N-terminus, the 326-residue chain is tRNA-modifying protein YgfZ (326 aa).

Folate contacts are provided by W27 and W189.

Belongs to the tRNA-modifying YgfZ family.

The protein resides in the cytoplasm. Its function is as follows. Folate-binding protein involved in regulating the level of ATP-DnaA and in the modification of some tRNAs. It is probably a key factor in regulatory networks that act via tRNA modification, such as initiation of chromosomal replication. The chain is tRNA-modifying protein YgfZ from Shigella sonnei (strain Ss046).